The primary structure comprises 272 residues: Undecaprenyl-diphosphatase (272 aa).

The next 8 helical transmembrane spans lie at 1–21, 38–58, 84–104, 112–132, 145–165, 183–203, 219–239, and 250–270; these read MSYL…FLPI, PGAT…VVFF, VRMG…GYLF, FRSL…LGLA, MTYG…VPGV, PVAA…SGLY, QTAV…AGLM, and FVVY…TGAI.

Belongs to the UppP family.

It is found in the cell membrane. It carries out the reaction di-trans,octa-cis-undecaprenyl diphosphate + H2O = di-trans,octa-cis-undecaprenyl phosphate + phosphate + H(+). Functionally, catalyzes the dephosphorylation of undecaprenyl diphosphate (UPP). Confers resistance to bacitracin. The sequence is that of Undecaprenyl-diphosphatase from Clavibacter michiganensis subsp. michiganensis (strain NCPPB 382).